Here is a 275-residue protein sequence, read N- to C-terminus: Dermonecrotic toxin SpeSicTox-betaIIA3i (275 aa).

The active site involves His-5. Mg(2+) is bound by residues Glu-25 and Asp-27. His-41 acts as the Nucleophile in catalysis. 2 disulfides stabilise this stretch: Cys-45–Cys-51 and Cys-47–Cys-190. Residue Asp-85 coordinates Mg(2+).

The protein belongs to the arthropod phospholipase D family. Class II subfamily. Requires Mg(2+) as cofactor. Expressed by the venom gland.

The protein localises to the secreted. It catalyses the reaction an N-(acyl)-sphingosylphosphocholine = an N-(acyl)-sphingosyl-1,3-cyclic phosphate + choline. It carries out the reaction an N-(acyl)-sphingosylphosphoethanolamine = an N-(acyl)-sphingosyl-1,3-cyclic phosphate + ethanolamine. The enzyme catalyses a 1-acyl-sn-glycero-3-phosphocholine = a 1-acyl-sn-glycero-2,3-cyclic phosphate + choline. The catalysed reaction is a 1-acyl-sn-glycero-3-phosphoethanolamine = a 1-acyl-sn-glycero-2,3-cyclic phosphate + ethanolamine. Its function is as follows. Dermonecrotic toxins cleave the phosphodiester linkage between the phosphate and headgroup of certain phospholipids (sphingolipid and lysolipid substrates), forming an alcohol (often choline) and a cyclic phosphate. This toxin acts on sphingomyelin (SM). It may also act on ceramide phosphoethanolamine (CPE), lysophosphatidylcholine (LPC) and lysophosphatidylethanolamine (LPE), but not on lysophosphatidylserine (LPS), and lysophosphatidylglycerol (LPG). It acts by transphosphatidylation, releasing exclusively cyclic phosphate products as second products. Induces dermonecrosis, hemolysis, increased vascular permeability, edema, inflammatory response, and platelet aggregation. The sequence is that of Dermonecrotic toxin SpeSicTox-betaIIA3i from Sicarius peruensis (Six-eyed sand spider).